A 293-amino-acid chain; its full sequence is Ribosomal protein L11 methyltransferase (293 aa).

Residues Thr-145, Gly-166, Asp-188, and Asn-230 each contribute to the S-adenosyl-L-methionine site.

Belongs to the methyltransferase superfamily. PrmA family.

Its subcellular location is the cytoplasm. It carries out the reaction L-lysyl-[protein] + 3 S-adenosyl-L-methionine = N(6),N(6),N(6)-trimethyl-L-lysyl-[protein] + 3 S-adenosyl-L-homocysteine + 3 H(+). Functionally, methylates ribosomal protein L11. The chain is Ribosomal protein L11 methyltransferase from Salmonella arizonae (strain ATCC BAA-731 / CDC346-86 / RSK2980).